A 385-amino-acid polypeptide reads, in one-letter code: Leucine aminopeptidase 1 (385 aa).

The signal sequence occupies residues 1-19 (MKFPSFLSLGIAASTTALA). The propeptide occupies 20 to 87 (ALPDQKPIGD…FPRAFAKTAV (68 aa)). The N-linked (GlcNAc...) asparagine glycan is linked to asparagine 177. Zn(2+) contacts are provided by histidine 185 and aspartate 204. An N-linked (GlcNAc...) asparagine glycan is attached at asparagine 229. Zn(2+) contacts are provided by glutamate 243 and aspartate 270. Cysteine 319 and cysteine 323 are joined by a disulfide. Zn(2+) is bound at residue histidine 352.

The protein belongs to the peptidase M28 family. M28E subfamily. In terms of assembly, monomer. It depends on Zn(2+) as a cofactor.

It is found in the secreted. Extracellular aminopeptidase that allows assimilation of proteinaceous substrates. The sequence is that of Leucine aminopeptidase 1 (LAP1) from Ajellomyces dermatitidis (strain ER-3 / ATCC MYA-2586) (Blastomyces dermatitidis).